A 173-amino-acid chain; its full sequence is NADH-ubiquinone oxidoreductase chain 6 (173 aa).

5 helical membrane passes run 1–21, 25–45, 53–73, 82–102, and 141–161; these read MVYF…AVAS, PYFA…LLVG, LVLF…TAAL, WGDW…FFVG, and GIML…ILEL.

The protein belongs to the complex I subunit 6 family.

It localises to the mitochondrion membrane. The catalysed reaction is a ubiquinone + NADH + 5 H(+)(in) = a ubiquinol + NAD(+) + 4 H(+)(out). Core subunit of the mitochondrial membrane respiratory chain NADH dehydrogenase (Complex I) that is believed to belong to the minimal assembly required for catalysis. Complex I functions in the transfer of electrons from NADH to the respiratory chain. The immediate electron acceptor for the enzyme is believed to be ubiquinone. This Squalus acanthias (Spiny dogfish) protein is NADH-ubiquinone oxidoreductase chain 6 (MT-ND6).